We begin with the raw amino-acid sequence, 184 residues long: dITP/XTP pyrophosphatase (184 aa).

8-13 is a substrate binding site; it reads TGNKGK. Residues glutamate 37 and aspartate 66 each coordinate Mg(2+). Aspartate 66 serves as the catalytic Proton acceptor. Substrate contacts are provided by residues serine 67, 142–145, lysine 163, and 168–169; these read FGYD and HR.

Belongs to the HAM1 NTPase family. In terms of assembly, homodimer. Mg(2+) serves as cofactor.

The catalysed reaction is XTP + H2O = XMP + diphosphate + H(+). The enzyme catalyses dITP + H2O = dIMP + diphosphate + H(+). It carries out the reaction ITP + H2O = IMP + diphosphate + H(+). In terms of biological role, pyrophosphatase that catalyzes the hydrolysis of nucleoside triphosphates to their monophosphate derivatives, with a high preference for the non-canonical purine nucleotides XTP (xanthosine triphosphate), dITP (deoxyinosine triphosphate) and ITP. Seems to function as a house-cleaning enzyme that removes non-canonical purine nucleotides from the nucleotide pool, thus preventing their incorporation into DNA/RNA and avoiding chromosomal lesions. This is dITP/XTP pyrophosphatase from Methanosarcina acetivorans (strain ATCC 35395 / DSM 2834 / JCM 12185 / C2A).